Consider the following 283-residue polypeptide: uncharacterized protein (283 aa).

N15 carries N-linked (GlcNAc...) asparagine glycosylation. One can recognise a PQ-loop 1 domain in the interval 15–81 (NATASTVFAI…QELNIALKVQ (67 aa)). Helical transmembrane passes span 19–39 (STVF…PQII), 48–68 (EGLD…LSVY), 108–128 (ALFV…MLIL), 138–158 (VEWP…IGFL), 170–190 (VTGI…FSFL), and 206–226 (GLLF…NVLL). Residues 149–204 (ATVLVNIGFLPQYISIFRARAVTGISYLFLAIDSSGSLFSFLSLPFDRWDVLAAVD) form the PQ-loop 2 domain. A glycan (N-linked (GlcNAc...) asparagine) is linked at N228.

The protein localises to the membrane. This is an uncharacterized protein from Schizosaccharomyces pombe (strain 972 / ATCC 24843) (Fission yeast).